Here is a 299-residue protein sequence, read N- to C-terminus: Oxygen-dependent coproporphyrinogen-III oxidase (299 aa).

Substrate is bound at residue Ser-92. Mn(2+) is bound by residues His-96 and His-106. The Proton donor role is filled by His-106. Position 108–110 (108–110 (NVR)) interacts with substrate. Mn(2+) contacts are provided by His-145 and His-175. An important for dimerization region spans residues 240–275 (YVEFNLVWDRGTLFGLQTGGRTESILMSMPPLVRWE). Residue 258-260 (GGR) participates in substrate binding.

The protein belongs to the aerobic coproporphyrinogen-III oxidase family. Homodimer. Requires Mn(2+) as cofactor.

The protein localises to the cytoplasm. The catalysed reaction is coproporphyrinogen III + O2 + 2 H(+) = protoporphyrinogen IX + 2 CO2 + 2 H2O. The protein operates within porphyrin-containing compound metabolism; protoporphyrin-IX biosynthesis; protoporphyrinogen-IX from coproporphyrinogen-III (O2 route): step 1/1. In terms of biological role, involved in the heme biosynthesis. Catalyzes the aerobic oxidative decarboxylation of propionate groups of rings A and B of coproporphyrinogen-III to yield the vinyl groups in protoporphyrinogen-IX. The protein is Oxygen-dependent coproporphyrinogen-III oxidase of Escherichia coli O17:K52:H18 (strain UMN026 / ExPEC).